Consider the following 256-residue polypeptide: Imidazole glycerol phosphate synthase subunit HisF (256 aa).

Active-site residues include Asp-12 and Asp-131.

This sequence belongs to the HisA/HisF family. In terms of assembly, heterodimer of HisH and HisF.

Its subcellular location is the cytoplasm. The enzyme catalyses 5-[(5-phospho-1-deoxy-D-ribulos-1-ylimino)methylamino]-1-(5-phospho-beta-D-ribosyl)imidazole-4-carboxamide + L-glutamine = D-erythro-1-(imidazol-4-yl)glycerol 3-phosphate + 5-amino-1-(5-phospho-beta-D-ribosyl)imidazole-4-carboxamide + L-glutamate + H(+). It functions in the pathway amino-acid biosynthesis; L-histidine biosynthesis; L-histidine from 5-phospho-alpha-D-ribose 1-diphosphate: step 5/9. Its function is as follows. IGPS catalyzes the conversion of PRFAR and glutamine to IGP, AICAR and glutamate. The HisF subunit catalyzes the cyclization activity that produces IGP and AICAR from PRFAR using the ammonia provided by the HisH subunit. The protein is Imidazole glycerol phosphate synthase subunit HisF of Pseudomonas putida (strain ATCC 700007 / DSM 6899 / JCM 31910 / BCRC 17059 / LMG 24140 / F1).